The chain runs to 119 residues: Protein TusC (119 aa).

The protein belongs to the DsrF/TusC family. As to quaternary structure, heterohexamer, formed by a dimer of trimers. The hexameric TusBCD complex contains 2 copies each of TusB, TusC and TusD. The TusBCD complex interacts with TusE.

The protein resides in the cytoplasm. Part of a sulfur-relay system required for 2-thiolation of 5-methylaminomethyl-2-thiouridine (mnm(5)s(2)U) at tRNA wobble positions. In Shigella flexneri serotype 5b (strain 8401), this protein is Protein TusC.